A 365-amino-acid polypeptide reads, in one-letter code: Succinyl-diaminopimelate desuccinylase (365 aa).

A Zn(2+)-binding site is contributed by H64. D66 is a catalytic residue. Zn(2+) is bound at residue D95. E125 acts as the Proton acceptor in catalysis. Positions 126, 154, and 339 each coordinate Zn(2+).

The protein belongs to the peptidase M20A family. DapE subfamily. As to quaternary structure, homodimer. Zn(2+) serves as cofactor. Co(2+) is required as a cofactor.

It catalyses the reaction N-succinyl-(2S,6S)-2,6-diaminopimelate + H2O = (2S,6S)-2,6-diaminopimelate + succinate. It participates in amino-acid biosynthesis; L-lysine biosynthesis via DAP pathway; LL-2,6-diaminopimelate from (S)-tetrahydrodipicolinate (succinylase route): step 3/3. In terms of biological role, catalyzes the hydrolysis of N-succinyl-L,L-diaminopimelic acid (SDAP), forming succinate and LL-2,6-diaminopimelate (DAP), an intermediate involved in the bacterial biosynthesis of lysine and meso-diaminopimelic acid, an essential component of bacterial cell walls. The sequence is that of Succinyl-diaminopimelate desuccinylase from Campylobacter fetus subsp. fetus (strain 82-40).